The chain runs to 453 residues: Putative ABC transporter ATP-binding protein MM_0462 (453 aa).

One can recognise an ABC transporter domain in the interval 4-239 (LETRSLKYSY…QELLKKVGLR (236 aa)). An ATP-binding site is contributed by 37–44 (GQNGSGKS).

Belongs to the ABC transporter superfamily.

The protein localises to the cell membrane. Its function is as follows. Probably part of an ABC transporter complex. Responsible for energy coupling to the transport system. The sequence is that of Putative ABC transporter ATP-binding protein MM_0462 from Methanosarcina mazei (strain ATCC BAA-159 / DSM 3647 / Goe1 / Go1 / JCM 11833 / OCM 88) (Methanosarcina frisia).